Here is a 134-residue protein sequence, read N- to C-terminus: ATP synthase epsilon chain (134 aa).

This sequence belongs to the ATPase epsilon chain family. As to quaternary structure, F-type ATPases have 2 components, CF(1) - the catalytic core - and CF(0) - the membrane proton channel. CF(1) has five subunits: alpha(3), beta(3), gamma(1), delta(1), epsilon(1). CF(0) has three main subunits: a, b and c.

It localises to the cell inner membrane. Its function is as follows. Produces ATP from ADP in the presence of a proton gradient across the membrane. The chain is ATP synthase epsilon chain from Nitratidesulfovibrio vulgaris (strain DSM 19637 / Miyazaki F) (Desulfovibrio vulgaris).